The following is a 340-amino-acid chain: Glyceraldehyde-3-phosphate dehydrogenase (340 aa).

NAD(+) is bound by residues 11 to 12 (SI) and Gly111. D-glyceraldehyde 3-phosphate is bound at residue 140 to 142 (SCN). Catalysis depends on Cys141, which acts as the Nucleophile. Arg169 is an NAD(+) binding site. 195 to 196 (HG) is a D-glyceraldehyde 3-phosphate binding site. Gln303 serves as a coordination point for NAD(+).

This sequence belongs to the glyceraldehyde-3-phosphate dehydrogenase family. In terms of assembly, homotetramer.

It localises to the cytoplasm. It catalyses the reaction D-glyceraldehyde 3-phosphate + phosphate + NADP(+) = (2R)-3-phospho-glyceroyl phosphate + NADPH + H(+). The catalysed reaction is D-glyceraldehyde 3-phosphate + phosphate + NAD(+) = (2R)-3-phospho-glyceroyl phosphate + NADH + H(+). It participates in carbohydrate degradation; glycolysis; pyruvate from D-glyceraldehyde 3-phosphate: step 1/5. The sequence is that of Glyceraldehyde-3-phosphate dehydrogenase from Methanococcus maripaludis (strain C7 / ATCC BAA-1331).